We begin with the raw amino-acid sequence, 253 residues long: MAGHSKWANIKRQKARVDAKKAQVFARLSRAMIVAARQGLPDPAANFQLRTAIEKAKAAGIPNDNIERAIAKGAGTLSGDGRQFESVRYEGYGPSGIAILIEALTDNRNRTAANLRAAFSKQGGNLGETGCVSWMFRQRGVVQLTGAIAEADLLEALLDLPAESYDLDESGAIVYCSIADLEALSTQLRQLGYPVEDSELRWIPNDYQLVTDGEQARSLLRLLDTLETLEDVCSVTANLELPPELVTALEATL.

Belongs to the TACO1 family.

Its subcellular location is the cytoplasm. The chain is Probable transcriptional regulatory protein Synpcc7942_1017 from Synechococcus elongatus (strain ATCC 33912 / PCC 7942 / FACHB-805) (Anacystis nidulans R2).